A 2177-amino-acid polypeptide reads, in one-letter code: MAAFGILSYEHRPLKRPRLGPPDVYPQDPKQKEDELTALNVKQGFNNQPAVSGDEHGSAKNVSFNPAKISSNFSSIIAEKLRCNTLPDTGRRKPQVNQKDNFWLVTARSQSAINTWFTDLAGTKPLTQLAKKVPIFSKKEEVFGYLAKYTVPVMRAAWLIKMTCAYYAAISETKVKKRHVDPFMEWTQIITKYLWEQLQKMAEYYRPGPAGSGGCGSTIGPLPHDVEVAIRQWDYTEKLAMFMFQDGMLDRHEFLTWVLECFEKIRPGEDELLKLLLPLLLRYSGEFVQSAYLSRRLAYFCTRRLALQLDGVSSHSSHVISAQSTSTLPTTPAPQPPTSSTPSTPFSDLLMCPQHRPLVFGLSCILQTILLCCPSALVWHYSLTDSRIKTGSPLDHLPIAPSNLPMPEGNSAFTQQVRAKLREIEQQIKERGQAVEVRWSFDKCQEATAGFTIGRVLHTLEVLDSHSFERSDFSNSLDSLCNRIFGLGPSKDGHEISSDDDAVVSLLCEWAVSCKRSGRHRAMVVAKLLEKRQAEIEAERCGESEAADEKGSIASGSLSAPSAPIFQDVLLQFLDTQAPMLTDPRSESERVEFFNLVLLFCELIRHDVFSHNMYTCTLISRGDLAFGAPGPRPPSPFDDPADDPEHKEAEGSSSSKLEDPGLSESMDIDPSSSVLFEDMEKPDFSLFSPTMPCEGKGSPSPEKPDVEKEVKPPPKEKIEGTLGVLYDQPRHVQYATHFPIPQEESCSHECNQRLVVLFGVGKQRDDARHAIKKITKDILKVLNRKGTAETDQLAPIVPLNPGDLTFLGGEDGQKRRRNRPEAFPTAEDIFAKFQHLSHYDQHQVTAQVSRNVLEQITSFALGMSYHLPLVQHVQFIFDLMEYSLSISGLIDFAIQLLNELSVVEAELLLKSSDLVGSYTTSLCLCIVAVLRHYHACLILNQDQMAQVFEGLCGVVKHGMNRSDGSSAERCILAYLYDLYTSCSHLKNKFGELFSDFCSKVKNTIYCNVEPSESNMRWAPEFMIDTLENPAAHTFTYTGLGKSLSENPANRYSFVCNALMHVCVGHHDPDRVNDIAILCAELTGYCKSLSAEWLGVLKALCCSSNNGTCGFNDLLCNVDVSDLSFHDSLATFVAILIARQCLLLEDLIRCAAIPSLLNAACSEQDSEPGARLTCRILLHLFKTPQLNPCQSDGNKPTVGIRSSCDRHLLAASQNRIVDGAVFAVLKAVFVLGDAELKGSGFTVTGGTEELPEEEGGGGSGGRRQGGRNISVETASLDVYAKYVLRSICQQEWVGERCLKSLCEDSNDLQDPVLSSAQAQRLMQLICYPHRLLDNEDGENPQRQRIKRILQNLDQWTMRQSSLELQLMIKQTPNNEMNSLLENIAKATIEVFQQSAETGSSSGSTASNMPSSSKTKPVLSSLERSGVWLVAPLIAKLPTSVQGHVLKAAGEELEKGQHLGSSSRKERDRQKQKSMSLLSQQPFLSLVLTCLKGQDEQREGLLTSLYSQVHQIVNNWRDDQYLDDCKPKQLMHEALKLRLNLVGGMFDTVQRSTQQTTEWAMLLLEIIISGTVDMQSNNELFTTVLDMLSVLINGTLAADMSSISQGSMEENKRAYMNLAKKLQKELGERQSDSLEKVRQLLPLPKQTRDVITCEPQGSLIDTKGNKIAGFDSIFKKEGLQVSTKQKISPWDLFEGLKPSAPLSWGWFGTVRVDRRVARGEEQQRLLLYHTHLRPRPRAYYLEPLPLPPEDEEPPAPTLLEPEKKAPEPPKTDKPGAAPPSTEERKKKSTKGKKRSQPATKTEDYGMGPGRSGPYGVTVPPDLLHHPNPGSITHLNYRQGSIGLYTQNQPLPAGGPRVDPYRPVRLPMQKLPTRPTYPGVLPTTMTGVMGLEPSSYKTSVYRQQQPAVPQGQRLRQQLQQSQGMLGQSSVHQMTPSSSYGLQTSQGYTPYVSHVGLQQHTGPAGTMVPPSYSSQPYQSTHPSTNPTLVDPTRHLQQRPSGYVHQQAPTYGHGLTSTQRFSHQTLQQTPMISTMTPMSAQGVQAGVRSTAILPEQQQQQQQQQQQQQQQQQQQQQQQQQQYHIRQQQQQQILRQQQQQQQQQQQQQQQQQQQQQQQQQQHQQQQQQQAAPPQPQPQSQPQFQRQGLQQTQQQQQTAALVRQLQQQLSNTQPQPSTNIFGRY.

Residues 12-35 are disordered; sequence RPLKRPRLGPPDVYPQDPKQKEDE. At K80 the chain carries N6-acetyllysine. Y166 bears the Phosphotyrosine mark. Disordered stretches follow at residues 323-344, 627-669, 690-717, and 1241-1266; these read QSTSTLPTTPAPQPPTSSTPST, GAPG…MDID, TMPCEGKGSPSPEKPDVEKEVKPPPKEK, and TVTGGTEELPEEEGGGGSGGRRQGGR. Phosphoserine occurs at positions 635, 665, 698, and 700. Residues 702–717 show a composition bias toward basic and acidic residues; it reads EKPDVEKEVKPPPKEK. Phosphoserine is present on residues S1258 and S1269. Positions 1394–1411 are enriched in low complexity; sequence AETGSSSGSTASNMPSSS. Disordered regions lie at residues 1394–1415, 1450–1474, and 1738–1829; these read AETGSSSGSTASNMPSSSKTKP, ELEKGQHLGSSSRKERDRQKQKSMS, and YLEP…PGSI. Basic and acidic residues-rich tracts occupy residues 1450–1469 and 1758–1771; these read ELEKGQHLGSSSRKERDRQK and EPEKKAPEPPKTDK. The interval 1616–2051 is interaction with CTNNB1 and GLI3; the sequence is LAKKLQKELG…VRSTAILPEQ (436 aa). The segment covering 1784 to 1793 has biased composition (basic residues); it reads KKSTKGKKRS. The residue at position 1798 (K1798) is an N6-acetyllysine. R1899 carries the asymmetric dimethylarginine; alternate modification. Position 1899 is an omega-N-methylarginine; alternate (R1899). Position 1910 is an omega-N-methylarginine (R1910). 2 disordered regions span residues 1919-1938 and 1967-1989; these read QGMLGQSSVHQMTPSSSYGL and SYSSQPYQSTHPSTNPTLVDPTR. Polar residues predominate over residues 1927–1938; it reads VHQMTPSSSYGL. A compositionally biased stretch (low complexity) spans 1967 to 1980; sequence SYSSQPYQSTHPST. R1994 and R2015 each carry asymmetric dimethylarginine. Composition is skewed to low complexity over residues 2115 to 2125, 2133 to 2149, and 2158 to 2171; these read QHQQQQQQQAA, SQPQFQRQGLQQTQQQQ, and LQQQLSNTQPQPST. 2 disordered regions span residues 2115-2149 and 2158-2177; these read QHQQQQQQQAAPPQPQPQSQPQFQRQGLQQTQQQQ and LQQQLSNTQPQPSTNIFGRY.

The protein belongs to the Mediator complex subunit 12 family. In terms of assembly, component of the Mediator complex, which is composed of MED1, MED4, MED6, MED7, MED8, MED9, MED10, MED11, MED12, MED13, MED13L, MED14, MED15, MED16, MED17, MED18, MED19, MED20, MED21, MED22, MED23, MED24, MED25, MED26, MED27, MED29, MED30, MED31, CCNC, CDK8 and CDC2L6/CDK11. The MED12, MED13, CCNC and CDK8 subunits form a distinct module termed the CDK8 module. Mediator containing the CDK8 module is less active than Mediator lacking this module in supporting transcriptional activation. Individual preparations of the Mediator complex lacking one or more distinct subunits have been variously termed ARC, CRSP, DRIP, PC2, SMCC and TRAP. Also interacts with CTNNB1 and GLI3. In terms of tissue distribution, ubiquitous.

It is found in the nucleus. Component of the Mediator complex, a coactivator involved in the regulated transcription of nearly all RNA polymerase II-dependent genes. Mediator functions as a bridge to convey information from gene-specific regulatory proteins to the basal RNA polymerase II transcription machinery. Mediator is recruited to promoters by direct interactions with regulatory proteins and serves as a scaffold for the assembly of a functional pre-initiation complex with RNA polymerase II and the general transcription factors. This subunit may specifically regulate transcription of targets of the Wnt signaling pathway and SHH signaling pathway. This chain is Mediator of RNA polymerase II transcription subunit 12 (MED12), found in Homo sapiens (Human).